The following is a 373-amino-acid chain: Phospho-N-acetylmuramoyl-pentapeptide-transferase (373 aa).

10 helical membrane passes run 28 to 48, 72 to 92, 94 to 114, 135 to 155, 177 to 197, 212 to 232, 252 to 272, 276 to 296, 301 to 321, and 350 to 370; these read LLTVITSLAFSIILGPRTIAY, TPTMGGVLILTSIGFSTLCWA, LANPYVWILMVVMVIFGAVGW, YFWLSVGALFVGSSLYYIASQ, IVPLSALPLGLGFIIFTYFVI, GLAILPVVFVAAGLGVFSYVS, VTIVCAAMIGSGLGFLWYNAH, VFMGDVGALALGAMLGTIAVM, IAFAIMGGLFVAEALSVILQV, and QVVVRFWIIAILLVVLGLMTL.

This sequence belongs to the glycosyltransferase 4 family. MraY subfamily. Requires Mg(2+) as cofactor.

It is found in the cell inner membrane. The enzyme catalyses UDP-N-acetyl-alpha-D-muramoyl-L-alanyl-gamma-D-glutamyl-meso-2,6-diaminopimeloyl-D-alanyl-D-alanine + di-trans,octa-cis-undecaprenyl phosphate = di-trans,octa-cis-undecaprenyl diphospho-N-acetyl-alpha-D-muramoyl-L-alanyl-D-glutamyl-meso-2,6-diaminopimeloyl-D-alanyl-D-alanine + UMP. It participates in cell wall biogenesis; peptidoglycan biosynthesis. In terms of biological role, catalyzes the initial step of the lipid cycle reactions in the biosynthesis of the cell wall peptidoglycan: transfers peptidoglycan precursor phospho-MurNAc-pentapeptide from UDP-MurNAc-pentapeptide onto the lipid carrier undecaprenyl phosphate, yielding undecaprenyl-pyrophosphoryl-MurNAc-pentapeptide, known as lipid I. In Psychrobacter sp. (strain PRwf-1), this protein is Phospho-N-acetylmuramoyl-pentapeptide-transferase.